Here is a 561-residue protein sequence, read N- to C-terminus: V-type proton ATPase catalytic subunit A (561 aa).

Residue 190–197 (GAFGCGKT) coordinates ATP.

Belongs to the ATPase alpha/beta chains family. V-ATPase is a heteromultimeric enzyme composed of a peripheral catalytic V1 complex (main components: subunits A, B, C, D, E, and F) attached to an integral membrane V0 proton pore complex (main component: the proteolipid protein). In terms of tissue distribution, high expression in the mesocotyl tip of etiolated seedlings compared to the base.

It catalyses the reaction ATP + H2O + 4 H(+)(in) = ADP + phosphate + 5 H(+)(out). Functionally, catalytic subunit of the peripheral V1 complex of vacuolar ATPase. V-ATPase vacuolar ATPase is responsible for acidifying a variety of intracellular compartments in eukaryotic cells. The chain is V-type proton ATPase catalytic subunit A from Zea mays (Maize).